Here is a 498-residue protein sequence, read N- to C-terminus: Glutamate--tRNA ligase (498 aa).

A 'HIGH' region motif is present at residues 11–21 (PSPTGHLHIGN). The 'KMSKS' region motif lies at 260 to 264 (KLSKR). An ATP-binding site is contributed by lysine 263.

The protein belongs to the class-I aminoacyl-tRNA synthetase family. Glutamate--tRNA ligase type 1 subfamily. In terms of assembly, monomer.

The protein localises to the cytoplasm. It catalyses the reaction tRNA(Glu) + L-glutamate + ATP = L-glutamyl-tRNA(Glu) + AMP + diphosphate. Functionally, catalyzes the attachment of glutamate to tRNA(Glu) in a two-step reaction: glutamate is first activated by ATP to form Glu-AMP and then transferred to the acceptor end of tRNA(Glu). The sequence is that of Glutamate--tRNA ligase from Leuconostoc mesenteroides subsp. mesenteroides (strain ATCC 8293 / DSM 20343 / BCRC 11652 / CCM 1803 / JCM 6124 / NCDO 523 / NBRC 100496 / NCIMB 8023 / NCTC 12954 / NRRL B-1118 / 37Y).